An 86-amino-acid chain; its full sequence is Anti-adapter protein IraP (86 aa).

Residues 1–36 (MKNLIAELLFKLAQKEEESKELCAQVEALEIIVTAM) are a coiled coil.

Belongs to the IraP family. As to quaternary structure, interacts with RssB.

The protein localises to the cytoplasm. Functionally, inhibits RpoS proteolysis by regulating RssB activity, thereby increasing the stability of the sigma stress factor RpoS especially during phosphate starvation, but also in stationary phase and during nitrogen starvation. Its effect on RpoS stability is due to its interaction with RssB, which probably blocks the interaction of RssB with RpoS, and the consequent delivery of the RssB-RpoS complex to the ClpXP protein degradation pathway. This is Anti-adapter protein IraP from Shigella flexneri serotype 5b (strain 8401).